Consider the following 600-residue polypeptide: Elongation factor 4 (600 aa).

Residues Ser-5–Glu-187 form the tr-type G domain. GTP is bound by residues Asp-17 to Thr-22 and Asn-134 to Asp-137.

It belongs to the TRAFAC class translation factor GTPase superfamily. Classic translation factor GTPase family. LepA subfamily.

The protein resides in the cell inner membrane. The catalysed reaction is GTP + H2O = GDP + phosphate + H(+). In terms of biological role, required for accurate and efficient protein synthesis under certain stress conditions. May act as a fidelity factor of the translation reaction, by catalyzing a one-codon backward translocation of tRNAs on improperly translocated ribosomes. Back-translocation proceeds from a post-translocation (POST) complex to a pre-translocation (PRE) complex, thus giving elongation factor G a second chance to translocate the tRNAs correctly. Binds to ribosomes in a GTP-dependent manner. This Paramagnetospirillum magneticum (strain ATCC 700264 / AMB-1) (Magnetospirillum magneticum) protein is Elongation factor 4.